The chain runs to 349 residues: Flagellar P-ring protein (349 aa).

An N-terminal signal peptide occupies residues 1–16 (MKYFFIIALLLSSLYS).

The protein belongs to the FlgI family. In terms of assembly, the basal body constitutes a major portion of the flagellar organelle and consists of four rings (L,P,S, and M) mounted on a central rod.

The protein localises to the periplasm. It is found in the bacterial flagellum basal body. In terms of biological role, assembles around the rod to form the L-ring and probably protects the motor/basal body from shearing forces during rotation. This chain is Flagellar P-ring protein, found in Aliarcobacter butzleri (strain RM4018) (Arcobacter butzleri).